The sequence spans 1314 residues: Angiotensin-converting enzyme (1314 aa).

The signal sequence occupies residues Met-1 to Ala-35. At Leu-36–Gln-1265 the chain is on the extracellular side. Asn-44, Asn-60, Asn-80, Asn-117, and Asn-166 each carry an N-linked (GlcNAc...) asparagine glycan. 2 Peptidase M2 domains span residues Ser-46–Pro-630 and Val-649–Pro-1228. An intrachain disulfide couples Cys-163 to Cys-171. A chloride-binding site is contributed by Tyr-237. Asn-324 is a glycosylation site (N-linked (GlcNAc...) asparagine). Cys-365 and Cys-383 are oxidised to a cystine. His-396 contributes to the Zn(2+) binding site. The active-site Proton acceptor 1 is Glu-397. His-400 and Glu-424 together coordinate Zn(2+). Asn-515 carries an N-linked (GlcNAc...) asparagine glycan. His-526 (proton donor 1) is an active-site residue. A chloride-binding site is contributed by Arg-535. The cysteines at positions 551 and 563 are disulfide-linked. Residues Asn-683, Asn-701, Asn-720, and Asn-766 are each glycosylated (N-linked (GlcNAc...) asparagine). A disulfide bridge links Cys-763 with Cys-769. Residues Arg-797 and Tyr-835 each coordinate chloride. Asn-948 is a glycosylation site (N-linked (GlcNAc...) asparagine). An intrachain disulfide couples Cys-963 to Cys-981. His-994 contacts Zn(2+). Catalysis depends on Glu-995, which acts as the Proton acceptor 2. Zn(2+) contacts are provided by His-998 and Glu-1022. 2 residues coordinate chloride: Trp-1096 and Arg-1100. Catalysis depends on His-1124, which acts as the Proton donor 2. Arg-1133 provides a ligand contact to chloride. A disulfide bridge links Cys-1149 with Cys-1161. Asn-1197 carries an N-linked (GlcNAc...) asparagine glycan. The segment at His-1221–Arg-1262 is juxtamembrane stalk. The chain crosses the membrane as a helical span at residues Trp-1266–Leu-1282. The Cytoplasmic segment spans residues Thr-1283 to Ser-1314. A disordered region spans residues Gly-1293 to Ser-1314. Ser-1307 bears the Phosphoserine mark.

It belongs to the peptidase M2 family. As to quaternary structure, monomer and homodimer; homodimerizes following binding to an inhibitor. Interacts with calmodulin (CALM1, CALM2 or CALM3); interaction takes place in the cytoplasmic region and regulates phosphorylation and proteolytic cleavage. Zn(2+) serves as cofactor. The cofactor is chloride. Post-translationally, produced following proteolytic cleavage by secretase enzymes that cleave the transmembrane form in the juxtamembrane stalk region upstream of the transmembrane region. Cleavage can take place at different sites of the juxtamembrane stalk region. Phosphorylated by CK2 on Ser-1307; which allows membrane retention. Phosphorylated on tyrosine residues on its extracellular part, promoting cleavage by secretase enzymes and formation of the soluble form (Angiotensin-converting enzyme, soluble form). As to expression, widely expressed with dominant expression in lung and kidney.

Its subcellular location is the cell membrane. It localises to the cytoplasm. The protein resides in the secreted. The enzyme catalyses Release of a C-terminal dipeptide, oligopeptide-|-Xaa-Yaa, when Xaa is not Pro, and Yaa is neither Asp nor Glu. Thus, conversion of angiotensin I to angiotensin II, with increase in vasoconstrictor activity, but no action on angiotensin II.. The catalysed reaction is angiotensin I + H2O = L-histidyl-L-leucine + angiotensin II. It carries out the reaction bradykinin + H2O = L-Phe-L-Arg + bradykinin(1-7). It catalyses the reaction substance P + H2O = substance P(1-9) + L-Leu-L-Met-NH2. The enzyme catalyses substance P + H2O = substance P(1-8) + Gly-L-Leu-L-Met-NH2. The catalysed reaction is substance P + H2O = L-Phe-L-Phe-Gly-L-Leu-L-Met-NH2 + substance P(1-6). It carries out the reaction neurotensin + H2O = neurotensin(1-11) + L-isoleucyl-L-leucine. It catalyses the reaction goralatide + H2O = N-acetyl-L-seryl-L-aspartate + L-lysyl-L-proline. The enzyme catalyses Met-enkephalin + H2O = L-phenylalanyl-L-methionine + L-tyrosylglycylglycine. The catalysed reaction is Leu-enkephalin + H2O = L-tyrosylglycylglycine + L-phenylalanyl-L-leucine. It carries out the reaction Met-enkephalin-Arg-Phe + H2O = L-arginyl-L-phenylalanine + Met-enkephalin. Its activity is regulated as follows. The dipeptidyl carboxypeptidase activity is strongly activated by chloride. The dipeptidyl carboxypeptidase activity is specifically inhibited by lisinopril, captopril and enalaprilat. Strongly inhibited by lisinopril and captopril. In terms of biological role, dipeptidyl carboxypeptidase that removes dipeptides from the C-terminus of a variety of circulating hormones, such as angiotensin I, bradykinin or enkephalins, thereby playing a key role in the regulation of blood pressure, electrolyte homeostasis or synaptic plasticity. Composed of two similar catalytic domains, each possessing a functional active site, with different selectivity for substrates. Plays a major role in the angiotensin-renin system that regulates blood pressure and sodium retention by the kidney by converting angiotensin I to angiotensin II, resulting in an increase of the vasoconstrictor activity of angiotensin. Also able to inactivate bradykinin, a potent vasodilator, and therefore enhance the blood pressure response. Acts as a regulator of synaptic transmission by mediating cleavage of neuropeptide hormones, such as substance P, neurotensin or enkephalins. Catalyzes degradation of different enkephalin neuropeptides (Met-enkephalin, Leu-enkephalin, Met-enkephalin-Arg-Phe and possibly Met-enkephalin-Arg-Gly-Leu). Acts as a regulator of synaptic plasticity in the nucleus accumbens of the brain by mediating cleavage of Met-enkephalin-Arg-Phe, a strong ligand of Mu-type opioid receptor OPRM1, into Met-enkephalin. Met-enkephalin-Arg-Phe cleavage by ACE decreases activation of OPRM1, leading to long-term synaptic potentiation of glutamate release. Also acts as a regulator of hematopoietic stem cell differentiation by mediating degradation of hemoregulatory peptide N-acetyl-SDKP (AcSDKP). Acts as a regulator of cannabinoid signaling pathway by mediating degradation of hemopressin, an antagonist peptide of the cannabinoid receptor CNR1. Involved in amyloid-beta metabolism by catalyzing degradation of Amyloid-beta protein 40 and Amyloid-beta protein 42 peptides, thereby preventing plaque formation. Catalyzes cleavage of cholecystokinin (maturation of Cholecystokinin-8 and Cholecystokinin-5) and Gonadoliberin-1 (both maturation and degradation) hormones. Degradation of hemoregulatory peptide N-acetyl-SDKP (AcSDKP) and amyloid-beta proteins is mediated by the N-terminal catalytic domain, while angiotensin I and cholecystokinin cleavage is mediated by the C-terminal catalytic region. Its function is as follows. Soluble form that is released in blood plasma and other body fluids following proteolytic cleavage in the juxtamembrane stalk region. Isoform produced by alternative promoter usage that is specifically expressed in spermatocytes and adult testis, and which is required for male fertility. In contrast to somatic isoforms, only contains one catalytic domain. Acts as a dipeptidyl carboxypeptidase that removes dipeptides from the C-terminus of substrates. The identity of substrates that are needed for male fertility is unknown. May also have a glycosidase activity which releases GPI-anchored proteins from the membrane by cleaving the mannose linkage in the GPI moiety. The GPIase activity was reported to be essential for the egg-binding ability of the sperm. This activity is however unclear and has been challenged by other groups, suggesting that it may be indirect. The protein is Angiotensin-converting enzyme of Mesocricetus auratus (Golden hamster).